We begin with the raw amino-acid sequence, 62 residues long: Frontoxin III (62 aa).

Disulfide bonds link cysteine 3–cysteine 24, cysteine 17–cysteine 41, cysteine 43–cysteine 54, and cysteine 55–cysteine 60.

As to expression, expressed by the venom gland.

The protein resides in the secreted. Its function is as follows. Binds to muscle nicotinic acetylcholine receptor (nAChR) and inhibit acetylcholine from binding to the receptor, thereby impairing neuromuscular transmission. This chain is Frontoxin III, found in Micrurus frontalis (Coral snake).